The primary structure comprises 173 residues: RNA pyrophosphohydrolase (173 aa).

The 144-residue stretch at 6-149 folds into the Nudix hydrolase domain; the sequence is GFRANVGIIL…KRGVYRRALR (144 aa). The Nudix box motif lies at 38–59; it reads GGIDEGETPLDAMYRELWEEVG.

The protein belongs to the Nudix hydrolase family. RppH subfamily. Requires a divalent metal cation as cofactor.

Functionally, accelerates the degradation of transcripts by removing pyrophosphate from the 5'-end of triphosphorylated RNA, leading to a more labile monophosphorylated state that can stimulate subsequent ribonuclease cleavage. The polypeptide is RNA pyrophosphohydrolase (Psychrobacter sp. (strain PRwf-1)).